We begin with the raw amino-acid sequence, 178 residues long: RNA pyrophosphohydrolase (178 aa).

Residues 18–171 (PYRPCVGLMV…KRKVYEQVVA (154 aa)) form the Nudix hydrolase domain. The short motif at 59–80 (GGIDKGEDPAQAALRELYEETG) is the Nudix box element.

The protein belongs to the Nudix hydrolase family. RppH subfamily. It depends on a divalent metal cation as a cofactor.

Functionally, accelerates the degradation of transcripts by removing pyrophosphate from the 5'-end of triphosphorylated RNA, leading to a more labile monophosphorylated state that can stimulate subsequent ribonuclease cleavage. This Brucella abortus (strain 2308) protein is RNA pyrophosphohydrolase.